We begin with the raw amino-acid sequence, 607 residues long: Threonine--tRNA ligase (607 aa).

An editing domain region spans residues 1–143; sequence MRVLYIHAER…SFKPEEARVA (143 aa). Catalytic regions lie at residues 193–489 and 194–489; these read PRYL…PRLP and RYLD…PRLP. The Zn(2+) site is built by C286, H337, and H458.

The protein belongs to the class-II aminoacyl-tRNA synthetase family. Homodimer. Zn(2+) is required as a cofactor.

The protein localises to the cytoplasm. It catalyses the reaction tRNA(Thr) + L-threonine + ATP = L-threonyl-tRNA(Thr) + AMP + diphosphate + H(+). Catalyzes the attachment of threonine to tRNA(Thr) in a two-step reaction: L-threonine is first activated by ATP to form Thr-AMP and then transferred to the acceptor end of tRNA(Thr). Also edits incorrectly charged L-seryl-tRNA(Thr). The sequence is that of Threonine--tRNA ligase from Pyrobaculum calidifontis (strain DSM 21063 / JCM 11548 / VA1).